The following is a 228-amino-acid chain: Homeobox-leucine zipper protein ATHB-53 (228 aa).

Positions 36–62 (DGGEESKPVKRRRKRRSKGSSATNEED) are disordered. Over residues 44-53 (VKRRRKRRSK) the composition is skewed to basic residues. Residues 68–127 (GMLRKRKLTDEQVNMLEYSFGNEHKLESGRKEKIAGELGLDPRQVAVWFQNRRARWKNKK) constitute a DNA-binding region (homeobox). Residues 128 to 156 (LEEEYAKLKNHHDNVVLGQCQLESQILKL) form a leucine-zipper region.

Belongs to the HD-ZIP homeobox family. Class I subfamily. As to expression, expressed in root meristem, late flowers and siliques.

It localises to the nucleus. Probable transcription factor that may play a regulatory role in auxin/cytokinin signaling during root development. The sequence is that of Homeobox-leucine zipper protein ATHB-53 (ATHB-53) from Arabidopsis thaliana (Mouse-ear cress).